Reading from the N-terminus, the 513-residue chain is Serine/threonine-protein kinase pakH (513 aa).

The region spanning phenylalanine 42 to isoleucine 294 is the Protein kinase domain. Residues leucine 48–valine 56 and lysine 71 each bind ATP. The active-site Proton acceptor is the aspartate 163. Residues lysine 313–aspartate 358 are disordered. Positions asparagine 331–asparagine 357 are enriched in low complexity. A helical transmembrane segment spans residues isoleucine 493–phenylalanine 512.

The protein belongs to the protein kinase superfamily. STE Ser/Thr protein kinase family. STE20 subfamily. Mg(2+) is required as a cofactor.

The protein resides in the membrane. The enzyme catalyses L-seryl-[protein] + ATP = O-phospho-L-seryl-[protein] + ADP + H(+). It carries out the reaction L-threonyl-[protein] + ATP = O-phospho-L-threonyl-[protein] + ADP + H(+). The chain is Serine/threonine-protein kinase pakH (pakH-1) from Dictyostelium discoideum (Social amoeba).